The chain runs to 331 residues: MREETVSWSLEDIREIYHTPVFELIHKANAILRSNFLHSELQTCYLISIKTGGCVEDCAYCAQSSRYHTHVTPEPMMKIVDVVERAKRAVELGATRVCLGAAWRNAKDDRYFDRVLAMVKSITDLGAEVCCALGMLSEEQAKKLYDAGLYAYNHNLDSSPEFYETIITTRSYEDRLNTLDVVNKSGISTCCGGIVGMGESEEDRIKLLHVLATRDHIPESVPVNLLWPIDGTPLQDQPPISFWEVLRTIATARVVFPRSMVRLAAGRAFLTVEQQTLCFLAGANSIFYGDKLLTVENNDIDEDAEMIKLLGLIPRPSFGIERGNPCYANNS.

Residues 39 to 264 (SELQTCYLIS…VFPRSMVRLA (226 aa)) enclose the Radical SAM core domain. Cys-54, Cys-58, and Cys-61 together coordinate [4Fe-4S] cluster. Cys-98, Cys-130, Cys-190, and Arg-262 together coordinate [2Fe-2S] cluster.

The protein belongs to the radical SAM superfamily. Biotin synthase family. Homodimer. Requires [4Fe-4S] cluster as cofactor. [2Fe-2S] cluster is required as a cofactor.

The catalysed reaction is (4R,5S)-dethiobiotin + (sulfur carrier)-SH + 2 reduced [2Fe-2S]-[ferredoxin] + 2 S-adenosyl-L-methionine = (sulfur carrier)-H + biotin + 2 5'-deoxyadenosine + 2 L-methionine + 2 oxidized [2Fe-2S]-[ferredoxin]. Its pathway is cofactor biosynthesis; biotin biosynthesis; biotin from 7,8-diaminononanoate: step 2/2. Catalyzes the conversion of dethiobiotin (DTB) to biotin by the insertion of a sulfur atom into dethiobiotin via a radical-based mechanism. In Chlamydia pneumoniae (Chlamydophila pneumoniae), this protein is Biotin synthase.